A 77-amino-acid chain; its full sequence is MAATDFVQEMRAVGERLLLKLQRLPQAEPVEIVAFSVIILFTATVLLLLLIACSCCCTHCCCPERRGRKVQVQPTPP.

Residues 32-52 form a helical membrane-spanning segment; sequence IVAFSVIILFTATVLLLLLIA.

Its subcellular location is the membrane. This chain is Small integral membrane protein 5 (SMIM5), found in Homo sapiens (Human).